The chain runs to 156 residues: Small ribosomal subunit protein uS7 (156 aa).

It belongs to the universal ribosomal protein uS7 family. As to quaternary structure, part of the 30S ribosomal subunit. Contacts proteins S9 and S11.

Functionally, one of the primary rRNA binding proteins, it binds directly to 16S rRNA where it nucleates assembly of the head domain of the 30S subunit. Is located at the subunit interface close to the decoding center, probably blocks exit of the E-site tRNA. The sequence is that of Small ribosomal subunit protein uS7 from Treponema denticola (strain ATCC 35405 / DSM 14222 / CIP 103919 / JCM 8153 / KCTC 15104).